The primary structure comprises 63 residues: Synergistic-type venom protein C9S3, chain 1 (63 aa).

Cystine bridges form between cysteine 3–cysteine 24, cysteine 17–cysteine 42, and cysteine 46–cysteine 57.

Belongs to the three-finger toxin family. Short-chain subfamily. Aminergic toxin sub-subfamily. As to quaternary structure, heterodimer of C9S3 chain 1 and chain 2 (AC P01409); disulfide-linked. Expressed by the venom gland.

Its subcellular location is the secreted. Its function is as follows. This protein shows a synergetic toxic effect in that it enhances the toxicity of other toxins. The sequence is that of Synergistic-type venom protein C9S3, chain 1 from Dendroaspis angusticeps (Eastern green mamba).